The sequence spans 219 residues: MDATDQGKSTSTTAAQAAPGKAAPRRGIGRDALVGGICGAVVVLMIGASYAAVPFYNWFCRATGFNGTTQVATAAPSAAPLARRIGVRFDANVAGGLPWKFEPEKTEIEVAIGEVVTVYYTVTNQSARTTMAQAAYNVTPLTSGAYFQKINCFCFTEQTMAPGETREMPVVFYVDPAITADHENDGLNTITLSYTFYPVRDAAPKPVAAGEPDKPRGSL.

A compositionally biased stretch (polar residues) spans 1 to 13; the sequence is MDATDQGKSTSTT. A disordered region spans residues 1–24; sequence MDATDQGKSTSTTAAQAAPGKAAP. Residues 1-29 are Cytoplasmic-facing; the sequence is MDATDQGKSTSTTAAQAAPGKAAPRRGIG. The segment covering 14–24 has biased composition (low complexity); that stretch reads AAQAAPGKAAP. Residues 30–52 form a helical; Signal-anchor for type II membrane protein membrane-spanning segment; that stretch reads RDALVGGICGAVVVLMIGASYAA. Residues 53 to 219 lie on the Periplasmic side of the membrane; it reads VPFYNWFCRA…GEPDKPRGSL (167 aa).

This sequence belongs to the COX11/CtaG family.

The protein localises to the cell inner membrane. In terms of biological role, exerts its effect at some terminal stage of cytochrome c oxidase synthesis, probably by being involved in the insertion of the copper B into subunit I. The protein is Cytochrome c oxidase assembly protein CtaG of Bradyrhizobium sp. (strain ORS 278).